The primary structure comprises 353 residues: S-adenosylmethionine decarboxylase proenzyme (353 aa).

Catalysis depends on residues glutamate 9 and glutamate 12. Serine 69 serves as the catalytic Schiff-base intermediate with substrate; via pyruvic acid. A Pyruvic acid (Ser); by autocatalysis modification is found at serine 69. The Proton donor; for catalytic activity role is filled by cysteine 83. Catalysis depends on proton acceptor; for processing activity residues serine 232 and histidine 245.

It belongs to the eukaryotic AdoMetDC family. Pyruvate serves as cofactor. Post-translationally, is synthesized initially as an inactive proenzyme. Formation of the active enzyme involves a self-maturation process in which the active site pyruvoyl group is generated from an internal serine residue via an autocatalytic post-translational modification. Two non-identical subunits are generated from the proenzyme in this reaction, and the pyruvate is formed at the N-terminus of the alpha chain, which is derived from the carboxyl end of the proenzyme. The post-translation cleavage follows an unusual pathway, termed non-hydrolytic serinolysis, in which the side chain hydroxyl group of the serine supplies its oxygen atom to form the C-terminus of the beta chain, while the remainder of the serine residue undergoes an oxidative deamination to produce ammonia and the pyruvoyl group blocking the N-terminus of the alpha chain.

It catalyses the reaction S-adenosyl-L-methionine + H(+) = S-adenosyl 3-(methylsulfanyl)propylamine + CO2. The protein operates within amine and polyamine biosynthesis; S-adenosylmethioninamine biosynthesis; S-adenosylmethioninamine from S-adenosyl-L-methionine: step 1/1. The protein is S-adenosylmethionine decarboxylase proenzyme (SAMDC) of Pisum sativum (Garden pea).